The chain runs to 731 residues: Inducible ornithine decarboxylase (731 aa).

Lys-356 bears the N6-(pyridoxal phosphate)lysine mark.

It belongs to the Orn/Lys/Arg decarboxylase class-I family. As to quaternary structure, dodecamer. Requires pyridoxal 5'-phosphate as cofactor.

It catalyses the reaction L-ornithine + H(+) = putrescine + CO2. The protein is Inducible ornithine decarboxylase (odcI) of Lactobacillus sp. (strain 30a).